A 415-amino-acid chain; its full sequence is Peptide chain release factor subunit 1-2 (415 aa).

It belongs to the eukaryotic release factor 1 family. In terms of assembly, heterodimer of two subunits, one of which binds GTP.

It localises to the cytoplasm. Its function is as follows. Directs the termination of nascent peptide synthesis (translation) in response to the termination codons UAA, UAG and UGA. The polypeptide is Peptide chain release factor subunit 1-2 (Methanosarcina acetivorans (strain ATCC 35395 / DSM 2834 / JCM 12185 / C2A)).